A 25-amino-acid chain; its full sequence is Toxin Tpa3 (25 aa).

Belongs to the non-disulfide-bridged peptide (NDBP) superfamily. Expressed by the venom gland.

Its subcellular location is the secreted. Unknown. Is not toxic to mammals. This is Toxin Tpa3 from Tityus pachyurus (Colombian scorpion).